The following is a 201-amino-acid chain: 3-isopropylmalate dehydratase small subunit (201 aa).

This sequence belongs to the LeuD family. LeuD type 1 subfamily. Heterodimer of LeuC and LeuD.

The catalysed reaction is (2R,3S)-3-isopropylmalate = (2S)-2-isopropylmalate. It participates in amino-acid biosynthesis; L-leucine biosynthesis; L-leucine from 3-methyl-2-oxobutanoate: step 2/4. Functionally, catalyzes the isomerization between 2-isopropylmalate and 3-isopropylmalate, via the formation of 2-isopropylmaleate. In Jannaschia sp. (strain CCS1), this protein is 3-isopropylmalate dehydratase small subunit.